Consider the following 745-residue polypeptide: MPLFKLTGQGKQIDDAMRSFAEKVFASEVKDEGGRHEISPFDVDEICPISLHEMQAHIFHMENLSMDGRRKRRFQGRKTVNLSIPQSETSSTKLSHIEEFISSSPTYESVPDFQRVQITGDYASGVTVEDFEVVCKGLYRALCIREKYMQKSFQRFPKTPSKYLRNIDGEALVGNESFYPVFTPPPKKGEDPFRTEDLPANLGYHLKMKAGVIYIYPDEAAANRDEPKPYPYPNLDDFLDDMNFLLALIAQGPVKTYAHRRLKFLSSKFQVHQMLNEMDELKELKNNPHRDFYNCRKVDTHIHAAACMNQKHLLRFIKKSYHIDADRVVYSTKEKSLTLKELFAKLNMHPYDLTVDSLDVHAGRQTFQRFDKFNDKYNPVGASELRDLYLKTDNYINGEYFATIIKEVGADLVEAKYQHAEPRLSIYGRSPDEWNKLSSWFVCNRIYCPNMTWMIQVPRIYDVFRSKNFLPHFGKMLENIFLPVFEATINPQAHPDLSVFLKHITGFDSVDDESKHSGHMFSSKSPKPEEWTMENNPSYTYYAYYMYANITVLNSLRKERGMNTFLFRPHCGEAGALTHLMTAFMIADNISHGLNLKKSPVLQYLFFLAQIPIAMSPLSNNSLFLEYAKNPFLDFLQKGLMISLSTDDPMQFHFTKEPLMEEYAIAAQVFKLSTCDMCEVARNSVLQCGISHEEKAKFLGNNYLEEGPVGNDIRRTNVAQIRMAYRYETWCYELNLIAEGLKATE.

The residue at position 79 (T79) is a Phosphothreonine. S83 is subject to Phosphoserine. Residue Y214 is modified to Phosphotyrosine. 2 residues coordinate Zn(2+): H301 and H303. Substrate-binding positions include H303 and 372–377 (KFNDKY). S439 carries the phosphoserine modification. H570 contributes to the Zn(2+) binding site. E573 is a substrate binding site. Catalysis depends on H592, which acts as the Proton acceptor. Residue D647 participates in Zn(2+) binding. Substrate is bound at residue 648 to 651 (DPMQ).

The protein belongs to the metallo-dependent hydrolases superfamily. Adenosine and AMP deaminases family. As to quaternary structure, homotetramer. Requires Zn(2+) as cofactor.

The catalysed reaction is AMP + H2O + H(+) = IMP + NH4(+). It participates in purine metabolism; IMP biosynthesis via salvage pathway; IMP from AMP: step 1/1. Its function is as follows. AMP deaminase plays a critical role in energy metabolism. The sequence is that of AMP deaminase 1 from Mus musculus (Mouse).